The chain runs to 80 residues: Diphthamide biosynthesis protein 3 (80 aa).

Positions 4–60 constitute a DPH-type MB domain; it reads FHDEVEIEDFEFDEEKDVYHYPCPCGDRFEIPREMLEMGEDVAQCPSCSLLIRVIYD. Positions 26, 28, 48, and 51 each coordinate Fe cation.

Belongs to the DPH3 family. As to quaternary structure, component of the 2-(3-amino-3-carboxypropyl)histidine synthase complex composed of dph-1, dph-2, dph-3 and a NADH-dependent reductase. Fe(2+) is required as a cofactor.

It catalyses the reaction [3Fe-4S](1+)-[protein] + Fe(2+)-[Dph3] = [3Fe-4S](0)-[protein] + Fe(3+)-[Dph3]. The enzyme catalyses 2 [3Fe-4S](0)-[protein] + 2 Fe(2+)-[Dph3] + NADH = 2 [4Fe-4S](1+)-[protein] + 2 [Dph3] + NAD(+) + H(+). Its pathway is protein modification; peptidyl-diphthamide biosynthesis. Its function is as follows. Required for the first step of diphthamide biosynthesis, a post-translational modification of histidine which occurs in elongation factor 2. Dph-1 and dph-2 transfer a 3-amino-3-carboxypropyl (ACP) group from S-adenosyl-L-methionine (SAM) to a histidine residue, the reaction is assisted by a reduction system comprising dph-3 and a NADH-dependent reductase. Acts as an electron donor to reduce the Fe-S cluster in dph1-dph2 keeping the [4Fe-4S] clusters in the active and reduced state. Restores iron to dph-1-dph-2 iron-sulfur clusters which have degraded from [4Fe-4S] to [3Fe-4S] by donating an iron atom to reform [4Fe-4S] clusters, in a manner dependent on the presence of elongation factor 2 and SAM. Associates with the elongator complex and is required for tRNA Wobble base modifications mediated by the elongator complex. The elongator complex is required for multiple tRNA modifications, including mcm5U (5-methoxycarbonylmethyl uridine), mcm5s 2U (5-methoxycarbonylmethyl-2-thiouridine), and ncm5U (5-carbamoylmethyl uridine). In Caenorhabditis elegans, this protein is Diphthamide biosynthesis protein 3.